The sequence spans 529 residues: MPMSLGNAFIKNFLGKAPDWYKVAIISFLIINPIVFFFVDPFVAGWLLVVEFIFTLAMALKCYPLQPGGLLAIEAIAIGMTSPEQVKHELVANIEVLLLLVFMVAGIYFMKQLLLFIFTKILLGIRSKAILSLAFCFAAAFLSAFLDALTVIAVVISVAVGFYSIYHKVASGKGVSSDHDHTQDDHLAELTREDLENYRAFLRSLLMHAGVGTALGGVTTMVGEPQNLIIADQASWLFGEFLIRMAPVTLPVFVCGLLTCFAVEKLKVFGYGAELPDNVRHILVEFDKEERKARTNQDVAKLWIQGLIAVWLIVGLALHLAAVGLIGLSVIILATAFTGVIEEHSLGKAFEEALPFTALLAVFFSIVAVIIDQELFKPVIDAVLAVEDKGTQLAMFYVANGLLSMVSDNVFVGTVYINEVKTALVEGIITRDQFDLLAVAINTGTNLPSVATPNGQAAFLFLLTSALAPLIRLSYGKMVIMALPYTIVLALVGLFGIVFLLEPMTAWFYDAGWIAHHVGEATHAVSGGH.

Helical transmembrane passes span 13–33, 34–54, 90–110, 113–133, 136–156, 205–225, 241–261, 306–326, 327–347, 351–371, 451–471, and 479–499; these read FLGK…IINP, IVFF…EFIF, LVAN…IYFM, LLLF…ILSL, CFAA…AVVI, LLMH…VGEP, FLIR…LTCF, GLIA…VGLI, GLSV…HSLG, EEAL…AVII, ATPN…APLI, and VIMA…GIVF.

The protein belongs to the NhaB Na(+)/H(+) (TC 2.A.34) antiporter family.

It localises to the cell inner membrane. It catalyses the reaction 2 Na(+)(in) + 3 H(+)(out) = 2 Na(+)(out) + 3 H(+)(in). In terms of biological role, na(+)/H(+) antiporter that extrudes sodium in exchange for external protons. The sequence is that of Na(+)/H(+) antiporter NhaB from Vibrio vulnificus (strain CMCP6).